The following is a 251-amino-acid chain: MTRSFFVGGNWKLNPTSLSAAKALVEALNKADLDPSTEVVVAPPALYLLPIQEIAGKAVKVAAQNAYFKESGAFTGEISPKQISDAGIPYVILGHSERRTLFHETSEVVALKTRAALDNGLKVILCIGETLKEREEGRTAAVCEEQLSAVVKQLKEEDWSNIVIAYEPVWAIGTGKVATTSQAQETHVDVRKYLATAVSPKVASETRVIYGGSVNAANSKDLASQQDIDGFLVGGASLKPEFVDIINARKA.

Substrate contacts are provided by Asn10 and Lys12. His95 serves as the catalytic Electrophile. Catalysis depends on Glu167, which acts as the Proton acceptor.

Belongs to the triosephosphate isomerase family. As to quaternary structure, homodimer.

The catalysed reaction is D-glyceraldehyde 3-phosphate = dihydroxyacetone phosphate. It participates in carbohydrate biosynthesis; gluconeogenesis. Its pathway is carbohydrate degradation; glycolysis; D-glyceraldehyde 3-phosphate from glycerone phosphate: step 1/1. The protein is Triosephosphate isomerase (TPI) of Coprinopsis cinerea (strain Okayama-7 / 130 / ATCC MYA-4618 / FGSC 9003) (Inky cap fungus).